The sequence spans 599 residues: Aspartate--tRNA(Asp/Asn) ligase (599 aa).

E169 contributes to the L-aspartate binding site. An aspartate region spans residues 193–196 (QLFK). Residue R215 coordinates L-aspartate. ATP is bound by residues 215 to 217 (RDE) and Q224. H447 is a binding site for L-aspartate. E481 contributes to the ATP binding site. R488 contributes to the L-aspartate binding site. Position 533–536 (533–536 (GWDR)) interacts with ATP.

This sequence belongs to the class-II aminoacyl-tRNA synthetase family. Type 1 subfamily. Homodimer.

It is found in the cytoplasm. It carries out the reaction tRNA(Asx) + L-aspartate + ATP = L-aspartyl-tRNA(Asx) + AMP + diphosphate. In terms of biological role, aspartyl-tRNA synthetase with relaxed tRNA specificity since it is able to aspartylate not only its cognate tRNA(Asp) but also tRNA(Asn). Reaction proceeds in two steps: L-aspartate is first activated by ATP to form Asp-AMP and then transferred to the acceptor end of tRNA(Asp/Asn). The chain is Aspartate--tRNA(Asp/Asn) ligase from Pseudarthrobacter chlorophenolicus (strain ATCC 700700 / DSM 12829 / CIP 107037 / JCM 12360 / KCTC 9906 / NCIMB 13794 / A6) (Arthrobacter chlorophenolicus).